The chain runs to 135 residues: ATP synthase epsilon chain (135 aa).

Over residues 89–100 (SGKAEAELEKAK) the composition is skewed to basic and acidic residues. Residues 89-114 (SGKAEAELEKAKNQLSQNKDQGNSPE) form a disordered region. Over residues 101-112 (NQLSQNKDQGNS) the composition is skewed to polar residues.

It belongs to the ATPase epsilon chain family. In terms of assembly, F-type ATPases have 2 components, CF(1) - the catalytic core - and CF(0) - the membrane proton channel. CF(1) has five subunits: alpha(3), beta(3), gamma(1), delta(1), epsilon(1). CF(0) has three main subunits: a, b and c.

The protein resides in the cellular thylakoid membrane. Its function is as follows. Produces ATP from ADP in the presence of a proton gradient across the membrane. This is ATP synthase epsilon chain from Prochlorococcus marinus (strain NATL2A).